A 355-amino-acid polypeptide reads, in one-letter code: tRNA-specific 2-thiouridylase MnmA (355 aa).

Residues leucine 6–serine 13 and leucine 33 each bind ATP. Cysteine 100 serves as the catalytic Nucleophile. Cysteines 100 and 195 form a disulfide. Glycine 123 contributes to the ATP binding site. Positions lysine 145–glutamine 147 are interaction with tRNA. The active-site Cysteine persulfide intermediate is the cysteine 195.

Belongs to the MnmA/TRMU family.

The protein resides in the cytoplasm. The catalysed reaction is S-sulfanyl-L-cysteinyl-[protein] + uridine(34) in tRNA + AH2 + ATP = 2-thiouridine(34) in tRNA + L-cysteinyl-[protein] + A + AMP + diphosphate + H(+). In terms of biological role, catalyzes the 2-thiolation of uridine at the wobble position (U34) of tRNA, leading to the formation of s(2)U34. The polypeptide is tRNA-specific 2-thiouridylase MnmA (Borreliella burgdorferi (strain ATCC 35210 / DSM 4680 / CIP 102532 / B31) (Borrelia burgdorferi)).